A 120-amino-acid polypeptide reads, in one-letter code: rRNA-processing protein CGR1 (120 aa).

Disordered stretches follow at residues 1 to 26 (MVNE…KAEK) and 81 to 120 (ERRE…LKER). Residues 47 to 106 (KKQKRLEDKQFKERLKALKDEKEEARQAKITMLKERREKKEENERYERLAAKMHAKKVER) are a coiled coil. The span at 81–96 (ERREKKEENERYERLA) shows a compositional bias: basic and acidic residues. Positions 97–113 (AKMHAKKVERMRRREKR) are enriched in basic residues.

The protein belongs to the CGR1 family.

It localises to the nucleus. The protein resides in the nucleolus. Its function is as follows. Involved in nucleolar integrity and required for processing of the pre-rRNA for the 60S ribosome subunit. This Saccharomyces cerevisiae (strain ATCC 204508 / S288c) (Baker's yeast) protein is rRNA-processing protein CGR1 (CGR1).